A 353-amino-acid polypeptide reads, in one-letter code: Aromatic amino acid aminotransferase (353 aa).

Residue Lys217 is modified to N6-(pyridoxal phosphate)lysine.

It belongs to the class-II pyridoxal-phosphate-dependent aminotransferase family. In terms of assembly, homodimer. Requires pyridoxal 5'-phosphate as cofactor.

It catalyses the reaction an aromatic L-alpha-amino acid + 2-oxoglutarate = an aromatic oxo-acid + L-glutamate. Functionally, aminotransferase that catalyzes the conversion of aromatic amino acids and 2-oxoglutarate into corresponding aromatic oxo acids and L-glutamate. This is Aromatic amino acid aminotransferase from Mycobacterium tuberculosis (strain ATCC 25177 / H37Ra).